The sequence spans 201 residues: FMN-dependent NADH:quinone oxidoreductase (201 aa).

FMN-binding positions include S10, 16–18 (SQS), 96–99 (MYNF), and 140–143 (SRGG).

This sequence belongs to the azoreductase type 1 family. Homodimer. Requires FMN as cofactor.

The catalysed reaction is 2 a quinone + NADH + H(+) = 2 a 1,4-benzosemiquinone + NAD(+). The enzyme catalyses N,N-dimethyl-1,4-phenylenediamine + anthranilate + 2 NAD(+) = 2-(4-dimethylaminophenyl)diazenylbenzoate + 2 NADH + 2 H(+). Its function is as follows. Quinone reductase that provides resistance to thiol-specific stress caused by electrophilic quinones. In terms of biological role, also exhibits azoreductase activity. Catalyzes the reductive cleavage of the azo bond in aromatic azo compounds to the corresponding amines. In Escherichia coli O9:H4 (strain HS), this protein is FMN-dependent NADH:quinone oxidoreductase.